A 572-amino-acid chain; its full sequence is Formate--tetrahydrofolate ligase (572 aa).

65 to 72 (TPLGEGKT) serves as a coordination point for ATP.

The protein belongs to the formate--tetrahydrofolate ligase family.

The catalysed reaction is (6S)-5,6,7,8-tetrahydrofolate + formate + ATP = (6R)-10-formyltetrahydrofolate + ADP + phosphate. Its pathway is one-carbon metabolism; tetrahydrofolate interconversion. The chain is Formate--tetrahydrofolate ligase from Chloroflexus aggregans (strain MD-66 / DSM 9485).